We begin with the raw amino-acid sequence, 232 residues long: Orotate phosphoribosyltransferase (232 aa).

K28 serves as a coordination point for 5-phospho-alpha-D-ribose 1-diphosphate. 36-37 (FF) lines the orotate pocket. 5-phospho-alpha-D-ribose 1-diphosphate-binding positions include 78–79 (YK), R108, K109, K112, H114, and 134–142 (DDVITAGTA). Residues T138 and R166 each coordinate orotate.

Belongs to the purine/pyrimidine phosphoribosyltransferase family. PyrE subfamily. In terms of assembly, homodimer.

The enzyme catalyses orotidine 5'-phosphate + diphosphate = orotate + 5-phospho-alpha-D-ribose 1-diphosphate. It participates in pyrimidine metabolism; UMP biosynthesis via de novo pathway; UMP from orotate: step 1/2. Its function is as follows. Catalyzes the transfer of a ribosyl phosphate group from 5-phosphoribose 1-diphosphate to orotate, leading to the formation of orotidine monophosphate (OMP). This Sordaria macrospora protein is Orotate phosphoribosyltransferase (URA5).